A 283-amino-acid polypeptide reads, in one-letter code: BTB/POZ domain-containing protein KCTD15 (283 aa).

The tract at residues 1 to 33 (MPHRKERPSGSSLNAHGSSGTAEGGNMSRLSLT) is disordered. Residues 9–21 (SGSSLNAHGSSGT) are compositionally biased toward polar residues. Residues Ser-31, Ser-35, and Ser-38 each carry the phosphoserine modification. The BTB domain occupies 56–126 (APVHIDVGGH…LRTSKLLLPD (71 aa)).

As to quaternary structure, forms oligomers, predominantly homopentamers. Interacts with KCTD1, probably forming heteropentamers depending on its abundance in a cell-type dependent manner. Interacts with TFAP2A; this interaction inhibits TFAP2A transcriptional activation. In terms of tissue distribution, expressed in the cerebral cortex, cerebellum, and hypothalamus (at protein level). Expressed in the arcuate hypothalamic nucleus, the ventromedial hypothalamic nucleus and the accumbens nucleus of the ventral striatum.

It localises to the nucleus. In terms of biological role, during embryonic development, interferes with neural crest formation. Inhibits AP2 transcriptional activity by interaction with its activation domain. This is BTB/POZ domain-containing protein KCTD15 (Kctd15) from Mus musculus (Mouse).